Reading from the N-terminus, the 47-residue chain is Protein YqhI (47 aa).

The chain is Protein YqhI from Escherichia coli (strain K12).